Reading from the N-terminus, the 667-residue chain is Receptor for retinol uptake STRA6 (667 aa).

The span at 1-13 (MSSQPAGNQTSPG) shows a compositional bias: polar residues. A disordered region spans residues 1 to 20 (MSSQPAGNQTSPGATEDYSY). Residues 1–50 (MSSQPAGNQTSPGATEDYSYGSWYIDEPQGGEELQPEGEVPSCHTSIPPG) lie on the Extracellular side of the membrane. Asparagine 8 carries N-linked (GlcNAc...) asparagine glycosylation. Residues 51-71 (LYHACLASLSILVLLLLAMLV) form a helical membrane-spanning segment. At 72-100 (RRRQLWPDCVRGRPGLPSPVDFLAGDRPR) the chain is on the cytoplasmic side. A helical membrane pass occupies residues 101–121 (AVPAAVFMVLLSSLCLLLPDE). Residues 122–144 (DALPFLTLASAPSQDGKTEAPRG) are Extracellular-facing. A helical membrane pass occupies residues 145 to 165 (AWKILGLFYYAALYYPLAACA). The Cytoplasmic segment spans residues 166-168 (TAG). A helical membrane pass occupies residues 169–189 (HTAAHLLGSTLSWAHLGVQVW). Residues 190 to 205 (QRAECPQVPKIYKYYS) are Extracellular-facing. Residues 206 to 226 (LLASLPLLLGLGFLSLWYPVQ) traverse the membrane as a helical segment. At 227–295 (LVRSFSRRTG…PQPGFHLPLK (69 aa)) the chain is on the cytoplasmic side. An interaction with RBP1 region spans residues 235-293 (TGAGSKGLQSSYSEEYLRNLLCRKKLGSSYHTSKHGFLSWARVCLRHCIYTPQPGFHLP). A helical transmembrane segment spans residues 296–316 (LVLSATLTGTAIYQVALLLLV). At 317–367 (GVVPTIQKVRAGVTTDVSYLLAGFGIVLSEDKQEVVELVKHHLWALEVCYI) the chain is on the extracellular side. Residues 368–388 (SALVLSCLLTFLVLMRSLVTH) traverse the membrane as a helical segment. Topologically, residues 389 to 422 (RTNLRALHRGAALDLSPLHRSPHPSRQAIFCWMS) are cytoplasmic. Residues 423–443 (FSAYQTAFICLGLLVQQIIFF) traverse the membrane as a helical segment. The Extracellular portion of the chain corresponds to 444–473 (LGTTALAFLVLMPVLHGRNLLLFRSLESSW). Residues 474 to 494 (PFWLTLALAVILQNMAAHWVF) traverse the membrane as a helical segment. Residues 495-509 (LETHDGHPQLTNRRV) are Cytoplasmic-facing. The segment at residues 510-547 (LYAATFLLFPLNVLVGAMVATWRVLLSALYNAIHLGQM) is an intramembrane region (helical). Over 548-667 (DLSLLPPRAA…ALLGANGAQP (120 aa)) the chain is Cytoplasmic. Tyrosine 643 carries the post-translational modification Phosphotyrosine.

Homodimer. Interacts with JAK2 and STAT5. Interacts (via extracellular domains) with RBP4. Interacts (via cytoplasmic domains) with RBP1. Post-translationally, phosphorylated on tyrosine residues in response to RBP4 binding. Phosphorylation requires the presence of LRAT, suggesting it may be triggered by the uptake of retinol that is then metabolized within the cell to retinoids that function as signaling molecules. As to expression, broad expression. In adult eye expressed in sclera, retina, retinal pigment epithelium, and trabecular meshwork but not in choroid and iris.

Its subcellular location is the cell membrane. Functionally, functions as a retinol transporter. Accepts all-trans retinol from the extracellular retinol-binding protein RBP4, facilitates retinol transport across the cell membrane, and then transfers retinol to the cytoplasmic retinol-binding protein RBP1. Retinol uptake is enhanced by LRAT, an enzyme that converts retinol to all-trans retinyl esters, the storage forms of vitamin A. Contributes to the activation of a signaling cascade that depends on retinol transport and LRAT-dependent generation of retinol metabolites that then trigger activation of JAK2 and its target STAT5, and ultimately increase the expression of SOCS3 and inhibit cellular responses to insulin. Important for the homeostasis of vitamin A and its derivatives, such as retinoic acid. STRA6-mediated transport is particularly important in the eye, and under conditions of dietary vitamin A deficiency. Does not transport retinoic acid. In Homo sapiens (Human), this protein is Receptor for retinol uptake STRA6 (STRA6).